Here is a 542-residue protein sequence, read N- to C-terminus: Protein OS-9 homolog (542 aa).

The N-terminal stretch at 1 to 21 (MQAKIIYALSAISALIPLGSS) is a signal peptide. N-linked (GlcNAc...) asparagine glycans are attached at residues asparagine 52 and asparagine 74. 4 disulfide bridges follow: cysteine 70/cysteine 258, cysteine 117/cysteine 130, cysteine 193/cysteine 227, and cysteine 208/cysteine 239. Positions 115 to 241 (ERCIFYQAGF…QVTIPELCNL (127 aa)) constitute an MRH domain. 6 residues coordinate a mannooligosaccharide derivative: tryptophan 125, glutamine 137, aspartate 194, arginine 200, glutamate 223, and tyrosine 229. N-linked (GlcNAc...) asparagine glycosylation occurs at asparagine 380. Positions 497-528 (NARMDDDESTSHTTRDIGEAGSQTTGNTESEV) are disordered. Residues 505-514 (STSHTTRDIG) are compositionally biased toward basic and acidic residues. A compositionally biased stretch (polar residues) spans 517 to 528 (GSQTTGNTESEV). The Prevents secretion from ER signature appears at 539-542 (HDEL).

The protein belongs to the OS-9 family. In terms of assembly, homodimer. Component of the HRD1 ubiquitin ligase complex which contains the E3 ligase HRD1, its cofactors HRD3, USA1 and DER1, substrate recruiting factor YOS9 and CDC48-binding protein UBX2. Within the complex, interacts (via N-terminus) with HRD3. In ERAD-L, HRD3 and YOS9 jointly bind misfolded glycoproteins in the endoplasmic reticulum (ER) lumen. Movement of ERAD-L substrates through the ER membrane is facilitated by HRD1 and DER1 which have lateral gates facing each other and which distort the membrane region between the lateral gates, making it much thinner than a normal phospholipid bilayer. Substrates insert into the membrane as a hairpin loop with one strand interacting with DER1 and the other with HRD1. The HRD1 complex interacts with the heterotrimeric CDC48-NPL4-UFD1 ATPase complex which is recruited by UBX2 via its interaction with CDC48 and which moves ubiquitinated substrates to the cytosol for targeting to the proteasome. Interacts with KAR2 and EMP47. Interacts with misfolded ER lumenal proteins like PCR1. Interacts with the GPI-anchored proteins GAS1 and MKC7.

The protein localises to the endoplasmic reticulum membrane. Functionally, lectin involved in the quality control of the secretory pathway. As a member of the endoplasmic reticulum-associated degradation lumenal (ERAD-L) surveillance system, targets misfolded endoplasmic reticulum lumenal glycoproteins for degradation. The recognition of targets is N-glycan specific. Functions in recruiting misfolded protein substrates in conjunction with HRD3. In Saccharomyces cerevisiae (strain ATCC 204508 / S288c) (Baker's yeast), this protein is Protein OS-9 homolog (YOS9).